The sequence spans 291 residues: Small ribosomal subunit protein uS2 (291 aa).

The segment at 231 to 291 (NRGSGTTEAP…AAEAPAEDAK (61 aa)) is disordered. Basic and acidic residues predominate over residues 246–259 (EWERELLEGSKAEE). Residues 260–285 (AAAAAPAENAEAPAAPAAEAPAAAEA) are compositionally biased toward low complexity.

This sequence belongs to the universal ribosomal protein uS2 family.

This is Small ribosomal subunit protein uS2 from Pseudarthrobacter chlorophenolicus (strain ATCC 700700 / DSM 12829 / CIP 107037 / JCM 12360 / KCTC 9906 / NCIMB 13794 / A6) (Arthrobacter chlorophenolicus).